Here is a 452-residue protein sequence, read N- to C-terminus: Pup--protein ligase (452 aa).

Position 9 (Glu9) interacts with Mg(2+). Arg53 lines the ATP pocket. Tyr55 is a Mg(2+) binding site. Catalysis depends on Asp57, which acts as the Proton acceptor. Glu63 is a binding site for Mg(2+). 2 residues coordinate ATP: Thr66 and Trp419.

It belongs to the Pup ligase/Pup deamidase family. Pup-conjugating enzyme subfamily.

It catalyses the reaction ATP + [prokaryotic ubiquitin-like protein]-L-glutamate + [protein]-L-lysine = ADP + phosphate + N(6)-([prokaryotic ubiquitin-like protein]-gamma-L-glutamyl)-[protein]-L-lysine.. Its pathway is protein degradation; proteasomal Pup-dependent pathway. It participates in protein modification; protein pupylation. Functionally, catalyzes the covalent attachment of the prokaryotic ubiquitin-like protein modifier Pup to the proteasomal substrate proteins, thereby targeting them for proteasomal degradation. This tagging system is termed pupylation. The ligation reaction involves the side-chain carboxylate of the C-terminal glutamate of Pup and the side-chain amino group of a substrate lysine. The protein is Pup--protein ligase of Nakamurella multipartita (strain ATCC 700099 / DSM 44233 / CIP 104796 / JCM 9543 / NBRC 105858 / Y-104) (Microsphaera multipartita).